A 128-amino-acid polypeptide reads, in one-letter code: uncharacterized protein (128 aa).

The segment covering 1–28 has biased composition (basic and acidic residues); that stretch reads MDADDFGKKDLENGNESPKKPIFMKDWK. The disordered stretch occupies residues 1–30; the sequence is MDADDFGKKDLENGNESPKKPIFMKDWKNS.

It localises to the cytoplasm. Its subcellular location is the nucleus. This is an uncharacterized protein from Schizosaccharomyces pombe (strain 972 / ATCC 24843) (Fission yeast).